We begin with the raw amino-acid sequence, 113 residues long: U11-theraphotoxin-Hhn1a (113 aa).

The signal sequence occupies residues 1-21 (MNTVRVTFLLVFVLAVSLGQA). A propeptide spanning residues 22–74 (DKDENRMEVQEKTEQGKSYLDFAENLLLQKLEELEAKLLEEDSEESRNSRQKR) is cleaved from the precursor. The interval 61-83 (EEDSEESRNSRQKRCIGEGVPCD) is disordered. 3 cysteine pairs are disulfide-bonded: Cys75/Cys90, Cys82/Cys95, and Cys89/Cys110.

This sequence belongs to the neurotoxin 14 (magi-1) family. 01 (HNTX-16) subfamily. As to expression, expressed by the venom gland.

It is found in the secreted. Functionally, probable ion channel inhibitor. The sequence is that of U11-theraphotoxin-Hhn1a from Cyriopagopus hainanus (Chinese bird spider).